A 1452-amino-acid polypeptide reads, in one-letter code: Protein clueless (1452 aa).

Disordered regions lie at residues 1 to 93 (MALE…SNGH) and 266 to 288 (KKTRPDSVDCTPPEYVTPGVSEP). Residues 8–24 (KNSNATATSDATATKAS) are compositionally biased toward low complexity. Positions 42–59 (PIPNSNHQNSNQNLVNGN) are enriched in polar residues. The span at 68–77 (AKKKGKKNRN) shows a compositional bias: basic residues. Ser272 carries the post-translational modification Phosphoserine. Residues 426 to 668 (RAEDAFSSKL…RTFPPDVNFL (243 aa)) enclose the Clu domain. 3 disordered regions span residues 726 to 775 (KQSE…GDTK), 962 to 1013 (AVSS…SSVS), and 1414 to 1452 (ANNNGEAEDAVPKDVEEQKEAGTQLTNGEKAAATEATSS). Basic and acidic residues predominate over residues 750–766 (GADKTDVKEEKNEENEK). Positions 970-985 (KKRGNGGKHNKHKSSK) are enriched in basic residues. Positions 990-1013 (QQQQQATGNQNGSSSGSSNGSSVS) are enriched in low complexity. The segment covering 1423–1433 (AVPKDVEEQKE) has biased composition (basic and acidic residues).

Belongs to the CLU family.

Its subcellular location is the cytoplasm. Functionally, mRNA-binding protein involved in proper cytoplasmic distribution of mitochondria. The protein is Protein clueless of Drosophila erecta (Fruit fly).